The primary structure comprises 460 residues: NADH-ubiquinone oxidoreductase chain 4 (460 aa).

13 helical membrane-spanning segments follow: residues 22–42 (WLWPTALTQSMLIALGSITWL), 61–81 (PLSTPLLVLSCWLLPLMLLAS), 94–113 (RMYITLLATLQLFLILAFGA), 117–139 (IMFYVMFEATLIPTLLVITRWGN), 148–168 (TYFLFYTLAGSLPLLVALLML), 195–217 (IWWAACMIAFLVKMPLYGMHLWL), 225–245 (PVAGSMVLAAVLLKLGGYGMM), 258–278 (MVYPFIVLALWGVIITGSICL), 285–304 (SLIAYSSVSHMGLVAGGILI), 308–330 (WGFTGALILMIAHGLASSALFCL), 351–371 (IALPLMTTWWFIASLANLALP), 394–414 (LILTGIGTLITAAYSLYMFLM), and 436–456 (LLMALHLIPLLLIILKPALLW).

This sequence belongs to the complex I subunit 4 family.

The protein resides in the mitochondrion membrane. It catalyses the reaction a ubiquinone + NADH + 5 H(+)(in) = a ubiquinol + NAD(+) + 4 H(+)(out). Functionally, core subunit of the mitochondrial membrane respiratory chain NADH dehydrogenase (Complex I) that is believed to belong to the minimal assembly required for catalysis. Complex I functions in the transfer of electrons from NADH to the respiratory chain. The immediate electron acceptor for the enzyme is believed to be ubiquinone. This chain is NADH-ubiquinone oxidoreductase chain 4 (MT-ND4), found in Gadus morhua (Atlantic cod).